Reading from the N-terminus, the 134-residue chain is Large ribosomal subunit protein bL20 (134 aa).

This sequence belongs to the bacterial ribosomal protein bL20 family.

Functionally, binds directly to 23S ribosomal RNA and is necessary for the in vitro assembly process of the 50S ribosomal subunit. It is not involved in the protein synthesizing functions of that subunit. This Rhizobium meliloti (strain 1021) (Ensifer meliloti) protein is Large ribosomal subunit protein bL20.